The following is a 223-amino-acid chain: Glutathione S-transferase U6 (223 aa).

Residues 5 to 84 (EEVKLLGIWA…YIDETWKHNP (80 aa)) form the GST N-terminal domain. Glutathione is bound by residues 15–16 (SP), 41–42 (NK), 55–56 (KI), and 68–69 (ES). One can recognise a GST C-terminal domain in the interval 89–216 (DPFQRSKARV…EKHIEHMNNM (128 aa)). T150 carries the phosphothreonine modification.

Belongs to the GST superfamily. Tau family.

The protein localises to the cytoplasm. It is found in the cytosol. It carries out the reaction RX + glutathione = an S-substituted glutathione + a halide anion + H(+). Functionally, may be involved in the conjugation of reduced glutathione to a wide number of exogenous and endogenous hydrophobic electrophiles and have a detoxification role against certain herbicides. This is Glutathione S-transferase U6 (GSTU6) from Arabidopsis thaliana (Mouse-ear cress).